Consider the following 482-residue polypeptide: MLPRHTDPIAAIATAPGRGAVGIVRVSGRGIGPLVEALCGRALRPREATYLPFRDAGGQAIDQGLALYFPAPHSYTGEDVLELQAHGGPVVLQLLLARCLQAAGEADRATGRPRLPGLRLARPGEFTERAFLNDKIDLAQAEAIADLIDASTEAAARSASRSLAGAFSDEIHRLRDALVHLRMLVEATLDFPEEEIDFLRKADAHGQLAALQRTLAEVMGRTRQGALLREGIKVVIAGQPNAGKSSLLNALAGAELAIVTPIAGTTRDKVQQTIQIEGVPLHVIDTAGLRESDDEVERIGIERAWQEIAAADAVLFLHDLTRAGQPDYEAADAEIAARLARMAPAHVPVVDVWNKSDRAEGSAAAGQGGVATASASGRAAAVRLSARTGEGLDGLRRVLLDIAGWQSAPEGIYTARARHLEALRAVDMHLMEAAAQLQCDGPALDLLAEELRLAQQALNAITGEFTSDDLLGVIFSSFCIGK.

Residues Arg-25, Glu-82, and Lys-135 each coordinate (6S)-5-formyl-5,6,7,8-tetrahydrofolate. The region spanning 231–404 (GIKVVIAGQP…LRRVLLDIAG (174 aa)) is the TrmE-type G domain. Asn-241 lines the K(+) pocket. Residues 241-246 (NAGKSS), 260-266 (TPIAGTT), 285-288 (DTAG), and 385-387 (SAR) contribute to the GTP site. Ser-245 contacts Mg(2+). K(+) contacts are provided by Thr-260, Ile-262, and Thr-265. Thr-266 provides a ligand contact to Mg(2+). Lys-482 is a binding site for (6S)-5-formyl-5,6,7,8-tetrahydrofolate.

This sequence belongs to the TRAFAC class TrmE-Era-EngA-EngB-Septin-like GTPase superfamily. TrmE GTPase family. As to quaternary structure, homodimer. Heterotetramer of two MnmE and two MnmG subunits. The cofactor is K(+).

It is found in the cytoplasm. Functionally, exhibits a very high intrinsic GTPase hydrolysis rate. Involved in the addition of a carboxymethylaminomethyl (cmnm) group at the wobble position (U34) of certain tRNAs, forming tRNA-cmnm(5)s(2)U34. This Paracidovorax citrulli (strain AAC00-1) (Acidovorax citrulli) protein is tRNA modification GTPase MnmE.